The sequence spans 549 residues: Probable protein kinase UbiB (549 aa).

Residues 123 to 501 (DFNEIPLASA…QQQAHKSNYL (379 aa)) form the Protein kinase domain. Residues 129-137 (LASASISQV) and lysine 152 contribute to the ATP site. The active-site Proton acceptor is aspartate 287. 2 helical membrane-spanning segments follow: residues 496 to 516 (HKSN…TLLI) and 520 to 540 (ATLW…FVGW).

This sequence belongs to the ABC1 family. UbiB subfamily.

It is found in the cell inner membrane. The protein operates within cofactor biosynthesis; ubiquinone biosynthesis [regulation]. Functionally, is probably a protein kinase regulator of UbiI activity which is involved in aerobic coenzyme Q (ubiquinone) biosynthesis. This Shewanella baltica (strain OS223) protein is Probable protein kinase UbiB.